We begin with the raw amino-acid sequence, 96 residues long: LSM complex subunit lsm2 (96 aa).

Residues 2 to 76 (LFYSFFKTLI…VRYVHMSSAY (75 aa)) form the Sm domain.

It belongs to the snRNP Sm proteins family. Component of the heptameric LSM1-LSM7 complex that forms a seven-membered ring structure with a donut shape. The LSm subunits are arranged in the order lsm1, lsm2, lsm3, lsm6, lsm5, lsm7 and lsm4. Component of the heptameric LSM2-LSM8 complex that forms a seven-membered ring structure with a donut shape. The LSm subunits are arranged in the order lsm8, lsm2, lsm3, lsm6, lsm5, lsm7 and lsm4.

The protein localises to the nucleus. It localises to the cytoplasm. Its function is as follows. Component of LSm protein complexes, which are involved in RNA processing and may function in a chaperone-like manner. Component of the cytoplasmic LSM1-LSM7 complex which is involved in mRNA degradation by activating the decapping step. The LSM1-LSM7 complex loads onto the 3'-end of single stranded RNA. Component of the nuclear LSM2-LSM8 complex, which is involved in spliceosome assembly. The LSM2-LSM8 complex plays a role in the biogenesis of the spliceosomal U4/U6-U5 tri-snRNP complex by accelerating prp24-mediated annealing of U4/U6 di-snRNA. The LSM2-LSM8 complex binds U6 snRNA terminating with a cyclic 2',3' phosphate group; RNA with an unmodified 3' hydroxyl or non-cyclic 3' phosphate is bound less tightly. The polypeptide is LSM complex subunit lsm2 (lsm2) (Schizosaccharomyces pombe (strain 972 / ATCC 24843) (Fission yeast)).